Reading from the N-terminus, the 391-residue chain is Outer membrane protein 41 (391 aa).

The first 20 residues, methionine 1 to alanine 20, serve as a signal peptide directing secretion. Pyrrolidone carboxylic acid is present on glutamine 21. Residues threonine 282–lysine 391 form the OmpA-like domain.

Belongs to the outer membrane OOP (TC 1.B.6) superfamily. Disulfide-linked heterodimer with Omp40.

It localises to the cell outer membrane. In terms of biological role, may have porin activity and function in peptidoglycan binding. This chain is Outer membrane protein 41, found in Porphyromonas gingivalis (strain ATCC BAA-308 / W83).